The sequence spans 733 residues: Probable Rho-GTPase-activating protein 6 (733 aa).

Positions Val-116–Pro-125 are enriched in polar residues. The interval Val-116–Thr-135 is disordered. Position 141 is a phosphothreonine (Thr-141). The disordered stretch occupies residues Arg-174 to Arg-256. Residues Ser-179–Ser-195 show a composition bias toward low complexity. Composition is skewed to polar residues over residues His-196 to Thr-218 and Pro-225 to Asp-240. The region spanning Thr-312–Leu-546 is the Rho-GAP domain. Residues Pro-692–Ser-713 are disordered. Over residues Lys-704–Ser-713 the composition is skewed to basic residues.

This Schizosaccharomyces pombe (strain 972 / ATCC 24843) (Fission yeast) protein is Probable Rho-GTPase-activating protein 6 (rga6).